Consider the following 379-residue polypeptide: Methionine aminopeptidase 1 (379 aa).

The C6H2-type zinc finger occupies 7–60 (KHICCGIDCNNEADRLQCPKCLNDGVKSYFCGQECFRNSWNIHKHLHRPPNVEK). Positions 10, 15, 24, 27, 37, 41, 49, and 53 each coordinate Zn(2+). H192 contributes to the a protein binding site. Zn(2+) is bound by residues D209, D220, and H289. Position 296 (H296) interacts with a protein. Zn(2+) is bound by residues E322 and E353. Position 373 is a phosphoserine (S373).

Belongs to the peptidase M24A family. Methionine aminopeptidase type 1 subfamily. Associates with the 60S ribosomal subunit of the 80S translational complex. Zn(2+) serves as cofactor. It depends on Co(2+) as a cofactor. Mn(2+) is required as a cofactor. Requires Fe(2+) as cofactor.

Its subcellular location is the cytoplasm. It is found in the nucleus. The protein localises to the nucleolus. The catalysed reaction is Release of N-terminal amino acids, preferentially methionine, from peptides and arylamides.. Cotranslationally removes the N-terminal methionine from nascent proteins. The N-terminal methionine is often cleaved when the second residue in the primary sequence is small and uncharged (Met-Ala-, Cys, Gly, Pro, Ser, Thr, or Val). In Schizosaccharomyces pombe (strain 972 / ATCC 24843) (Fission yeast), this protein is Methionine aminopeptidase 1 (fma1).